We begin with the raw amino-acid sequence, 364 residues long: Spermidine/putrescine import ATP-binding protein PotA (364 aa).

An ABC transporter domain is found at 5-235 (LSLKSVSKSY…PVNRFVADFI (231 aa)). 37–44 (GPSGCGKT) lines the ATP pocket.

The protein belongs to the ABC transporter superfamily. Spermidine/putrescine importer (TC 3.A.1.11.1) family. In terms of assembly, the complex is composed of two ATP-binding proteins (PotA), two transmembrane proteins (PotB and PotC) and a solute-binding protein (PotD).

The protein resides in the cell membrane. It catalyses the reaction ATP + H2O + polyamine-[polyamine-binding protein]Side 1 = ADP + phosphate + polyamineSide 2 + [polyamine-binding protein]Side 1.. Functionally, part of the ABC transporter complex PotABCD involved in spermidine/putrescine import. Responsible for energy coupling to the transport system. This is Spermidine/putrescine import ATP-binding protein PotA from Staphylococcus aureus (strain USA300).